The following is a 485-amino-acid chain: Betaine aldehyde dehydrogenase (485 aa).

Thr-23, Ile-24, and Asp-90 together coordinate K(+). Position 147 to 149 (147 to 149 (GAW)) interacts with NAD(+). Lys-159 functions as the Charge relay system in the catalytic mechanism. NAD(+)-binding positions include 173 to 176 (KPSE) and 226 to 229 (EVGT). K(+) is bound at residue Leu-241. Catalysis depends on Glu-247, which acts as the Proton acceptor. NAD(+)-binding residues include Gly-249, Cys-281, and Glu-382. Residue Cys-281 is the Nucleophile of the active site. The residue at position 281 (Cys-281) is a Cysteine sulfenic acid (-SOH). Residues Lys-452 and Gly-455 each contribute to the K(+) site. The Charge relay system role is filled by Glu-459.

It belongs to the aldehyde dehydrogenase family. Dimer of dimers. K(+) is required as a cofactor.

It catalyses the reaction betaine aldehyde + NAD(+) + H2O = glycine betaine + NADH + 2 H(+). It functions in the pathway amine and polyamine biosynthesis; betaine biosynthesis via choline pathway; betaine from betaine aldehyde: step 1/1. Its function is as follows. Involved in the biosynthesis of the osmoprotectant glycine betaine. Catalyzes the irreversible oxidation of betaine aldehyde to the corresponding acid. This chain is Betaine aldehyde dehydrogenase, found in Marinomonas sp. (strain MWYL1).